Reading from the N-terminus, the 63-residue chain is Cecropin-B (63 aa).

The signal sequence occupies residues Met1–Ala23. The residue at position 62 (Arg62) is an Arginine amide.

This sequence belongs to the cecropin family. Strongly expressed in larval, pupal and adult fat body and hemocytes after injection of bacteria. Maximal expression is seen in pupae.

Its subcellular location is the secreted. Functionally, cecropins have lytic and antibacterial activity against several Gram-positive and Gram-negative bacteria. This is Cecropin-B (CecB) from Drosophila melanogaster (Fruit fly).